The following is a 495-amino-acid chain: ATP synthase subunit beta, chloroplastic (495 aa).

An ATP-binding site is contributed by Gly-172–Thr-179.

It belongs to the ATPase alpha/beta chains family. In terms of assembly, F-type ATPases have 2 components, CF(1) - the catalytic core - and CF(0) - the membrane proton channel. CF(1) has five subunits: alpha(3), beta(3), gamma(1), delta(1), epsilon(1). CF(0) has four main subunits: a(1), b(1), b'(1) and c(9-12).

Its subcellular location is the plastid. It localises to the chloroplast thylakoid membrane. It carries out the reaction ATP + H2O + 4 H(+)(in) = ADP + phosphate + 5 H(+)(out). Functionally, produces ATP from ADP in the presence of a proton gradient across the membrane. The catalytic sites are hosted primarily by the beta subunits. The protein is ATP synthase subunit beta, chloroplastic of Bowiea volubilis (Climbing onion).